Consider the following 463-residue polypeptide: V-type proton ATPase subunit S1 (463 aa).

Residues 1 to 32 form the signal peptide; sequence MMAATVVSRIRTGTRWAPVLWLLLSLVAVAAA. Residues 33-225 constitute a propeptide that is removed on maturation; the sequence is VAAEQQVPLV…TAVRPSRVAR (193 aa). Residues 33-412 lie on the Lumenal side of the membrane; sequence VAAEQQVPLV…EQFSYASDCA (380 aa). N-linked (GlcNAc...) asparagine glycosylation is found at asparagine 164, asparagine 255, asparagine 267, asparagine 290, asparagine 297, asparagine 344, asparagine 351, and asparagine 399. The chain crosses the membrane as a helical span at residues 413-433; sequence GFFSPGIWMGLLTTLFMLFIF. At 434-463 the chain is on the cytoplasmic side; that stretch reads TYGLHMILSLKTMDRFDDRKGPTITLTQIV.

This sequence belongs to the vacuolar ATPase subunit S1 family. In terms of assembly, accessory component of the multisubunit proton-transporting vacuolar (V)-ATPase protein pump. Interacts (via N-terminus) with ATP6AP2 (via N-terminus). Interacts with RNASEK. Interacts with TMEM106B (via C-terminus). Post-translationally, N-glycosylated. As to expression, expressed in brain (at protein level).

The protein localises to the endoplasmic reticulum membrane. It is found in the endoplasmic reticulum-Golgi intermediate compartment membrane. Its subcellular location is the cytoplasmic vesicle. It localises to the secretory vesicle. The protein resides in the synaptic vesicle membrane. The protein localises to the clathrin-coated vesicle membrane. Its function is as follows. Accessory subunit of the proton-transporting vacuolar (V)-ATPase protein pump, which is required for luminal acidification of secretory vesicles. Guides the V-type ATPase into specialized subcellular compartments, such as neuroendocrine regulated secretory vesicles or the ruffled border of the osteoclast, thereby regulating its activity. Involved in membrane trafficking and Ca(2+)-dependent membrane fusion. May play a role in the assembly of the V-type ATPase complex. In aerobic conditions, involved in intracellular iron homeostasis, thus triggering the activity of Fe(2+) prolyl hydroxylase (PHD) enzymes, and leading to HIF1A hydroxylation and subsequent proteasomal degradation. In islets of Langerhans cells, may regulate the acidification of dense-core secretory granules. The sequence is that of V-type proton ATPase subunit S1 (Atp6ap1) from Rattus norvegicus (Rat).